Consider the following 784-residue polypeptide: Transcription factor kayak (784 aa).

3 stretches are compositionally biased toward low complexity: residues 97–106 (QPTQSAYQQQ), 115–126 (NNNNNSNNNANM), and 198–227 (QQQQQSQQQQQSQQQQQSQQQQQSQQQQQQ). 4 disordered regions span residues 97–126 (QPTQSAYQQQNAKQSYGHNNNNNSNNNANM), 196–231 (YNQQQQQSQQQQQSQQQQQSQQQQQSQQQQQQHLPT), 358–404 (PGSD…GNGS), and 421–464 (SGRG…KRRI). Positions 365 to 378 (SNGSWNEGQLNDDQ) are enriched in polar residues. Residues 380–397 (TTDTSSAATDSTSYQNGG) are compositionally biased toward low complexity. Polar residues predominate over residues 421-438 (SGRGSGLAANSTTSNSAT). In terms of domain architecture, bZIP spans 459 to 522 (EEKRRIRRER…SQLEYVLQTH (64 aa)). The segment at 461-463 (KRR) is basic motif. The tract at residues 464 to 471 (IRRERNKL) is leucine-zipper. A Phosphoserine modification is found at Ser594. Disordered stretches follow at residues 616–635 (QDGAIDSGSSLDQDGPTPAK) and 759–784 (PTCSSQNKHPLELPTPTSEPSKLVSL).

The protein belongs to the bZIP family. Fos subfamily. In terms of assembly, homodimer. Heterodimer with Jra. The kay-Jra heterodimer binds more stably to the AP-1 site than either of the two proteins alone.

It is found in the nucleus. Functionally, developmentally regulated transcription factor AP-1 binds and recognizes the enhancer DNA sequence: 5'-TGA[CG]TCA-3'. May play a role in the function or determination of a particular subset of cells in the developing embryo. It is able to carry out its function either independently of or in conjunction with Jra. The polypeptide is Transcription factor kayak (Drosophila mojavensis (Fruit fly)).